Reading from the N-terminus, the 715-residue chain is Fatty acid oxidation complex subunit alpha (715 aa).

Residues 1 to 190 form an enoyl-CoA hydratase region; sequence MTTTSAFMLN…KAGLVDDVVP (190 aa). Residues 306 to 715 form a 3-hydroxyacyl-CoA dehydrogenase region; the sequence is GPLNSVGILG…WTNGETDQGN (410 aa).

The protein in the N-terminal section; belongs to the enoyl-CoA hydratase/isomerase family. In the central section; belongs to the 3-hydroxyacyl-CoA dehydrogenase family. Heterotetramer of two alpha chains (FadJ) and two beta chains (FadI).

It localises to the cytoplasm. The enzyme catalyses a (3S)-3-hydroxyacyl-CoA = a (2E)-enoyl-CoA + H2O. It carries out the reaction a 4-saturated-(3S)-3-hydroxyacyl-CoA = a (3E)-enoyl-CoA + H2O. It catalyses the reaction a (3S)-3-hydroxyacyl-CoA + NAD(+) = a 3-oxoacyl-CoA + NADH + H(+). The catalysed reaction is (3S)-3-hydroxybutanoyl-CoA = (3R)-3-hydroxybutanoyl-CoA. It participates in lipid metabolism; fatty acid beta-oxidation. In terms of biological role, catalyzes the formation of a hydroxyacyl-CoA by addition of water on enoyl-CoA. Also exhibits 3-hydroxyacyl-CoA epimerase and 3-hydroxyacyl-CoA dehydrogenase activities. In Salmonella enteritidis PT4 (strain P125109), this protein is Fatty acid oxidation complex subunit alpha.